A 405-amino-acid chain; its full sequence is Serpin H1 (405 aa).

An N-terminal signal peptide occupies residues 1-15; sequence MQIFLVLALCGLAAA. N-linked (GlcNAc...) asparagine glycosylation is found at N107 and N112. Residues 402–405 carry the Prevents secretion from ER motif; sequence RDEL.

The protein belongs to the serpin family.

The protein resides in the endoplasmic reticulum lumen. Functionally, binds specifically to collagen. Could be involved as a chaperone in the biosynthetic pathway of collagen. This chain is Serpin H1 (SERPINH1), found in Gallus gallus (Chicken).